The primary structure comprises 21 residues: Formate ester dehydrogenase beta chain (21 aa).

In terms of assembly, heterotrimer composed of an alpha, a beta and a gamma chain.

In Amycolatopsis methanolica, this protein is Formate ester dehydrogenase beta chain.